The primary structure comprises 381 residues: Lipid-A-disaccharide synthase (381 aa).

The protein belongs to the LpxB family.

It carries out the reaction 2-N,3-O-bis[(3R)-3-hydroxytetradecanoyl]-alpha-D-glucosaminyl 1-phosphate + UDP-2-N,3-O-bis[(3R)-3-hydroxytetradecanoyl]-alpha-D-glucosamine = lipid A disaccharide (E. coli) + UDP + H(+). The enzyme catalyses a lipid X + a UDP-2-N,3-O-bis[(3R)-3-hydroxyacyl]-alpha-D-glucosamine = a lipid A disaccharide + UDP + H(+). The protein operates within glycolipid biosynthesis; lipid IV(A) biosynthesis; lipid IV(A) from (3R)-3-hydroxytetradecanoyl-[acyl-carrier-protein] and UDP-N-acetyl-alpha-D-glucosamine: step 5/6. Condensation of UDP-2,3-diacylglucosamine and 2,3-diacylglucosamine-1-phosphate to form lipid A disaccharide, a precursor of lipid A, a phosphorylated glycolipid that anchors the lipopolysaccharide to the outer membrane of the cell. The polypeptide is Lipid-A-disaccharide synthase (Erwinia tasmaniensis (strain DSM 17950 / CFBP 7177 / CIP 109463 / NCPPB 4357 / Et1/99)).